The sequence spans 72 residues: uncharacterized protein (72 aa).

This is an uncharacterized protein from Escherichia coli O157:H7.